The sequence spans 72 residues: MDATAIHERWSVMSNASIGQEIGVEGLTGLDVDALEISDYVDETLLDGEDLTVTMIASASCTTCICTCSCSS.

Residues 1–55 (MDATAIHERWSVMSNASIGQEIGVEGLTGLDVDALEISDYVDETLLDGEDLTVTM) constitute a propeptide that is removed on maturation. The 4-(1-hydroxyethyl)-7-isoleucino-2-(threonin-O3-ylcarbonyl)-7,8-dihydroquinolin-8-ol (Ile-Thr) cross-link spans 56–67 (IASASCTTCICT). At S58 the chain carries 2,3-didehydroalanine (Ser). Positions 60–61 (SC) form a cross-link, thiazole-4-carboxylic acid (Ser-Cys). Positions 60 to 68 (SCTTCICTC) form a cross-link, 5-amino-piperideine-2,5-dicarboxylic acid (Ser-Cys) (with S-69). Positions 60 to 69 (SCTTCICTCS) form a cross-link, 5-amino-piperideine-2,5-dicarboxylic acid (Ser-Ser) (with C-68). The residue at position 63 (T63) is a (Z)-2,3-didehydrobutyrine. The (4S)-thiazoline-4-carboxylic acid (Thr-Cys) cross-link spans 63 to 64 (TC). I65 carries the (3S,4R)-3,4-dihydroxyisoleucine modification. Residues 65–66 (IC) constitute a cross-link (thiazole-4-carboxylic acid (Ile-Cys)). A cross-link (thiazole-4-carboxylic acid (Thr-Cys)) is located at residues 67 to 68 (TC). The thiazole-4-carboxylic acid (Ser-Cys) cross-link spans 69 to 70 (SC). Residues S71 and S72 each carry the 2,3-didehydroalanine (Ser) modification. Serine amide is present on S72.

This sequence belongs to the thiocillin family. Post-translationally, maturation of thiazole and oxazole containing antibiotics involves the enzymatic condensation of a Cys, Ser or Thr with the alpha-carbonyl of the preceding amino acid to form a thioether or ether bond, then dehydration to form a double bond with the alpha-amino nitrogen. Thiazoline or oxazoline ring are dehydrogenated to form thiazole or oxazole rings. In terms of processing, maturation of pyridinyl containing antibiotics involves the cross-linking of a Ser and a Cys-Ser pair usually separated by 7 or 8 residues along the peptide chain. The Ser residues are dehydrated to didehydroalanines, then bonded between their beta carbons. The alpha carbonyl of the Cys condenses with alpha carbon of the first Ser to form a pyridinyl ring. The ring may be multiply dehydrogenated to form a pyridine ring with loss of the amino nitrogen of the first Ser. The amidation of Ser-72 probably does not occur by the same mechanism, oxidative cleavage of glycine, as in eukaryotes. Post-translationally, the structure of the 2,3-didehydrobutyrin is shown to be Z-isomer.

Its subcellular location is the secreted. Its function is as follows. Has bacteriocidal activity. Inhibits bacterial protein biosynthesis by acting on the elongation factor Tu (EF-Tu). The sequence is that of Thiostrepton (tpdA) from Streptomyces azureus.